A 300-amino-acid polypeptide reads, in one-letter code: Ribosomal protein L11 methyltransferase (300 aa).

The S-adenosyl-L-methionine site is built by threonine 152, glycine 173, aspartate 195, and asparagine 234.

Belongs to the methyltransferase superfamily. PrmA family.

The protein resides in the cytoplasm. It carries out the reaction L-lysyl-[protein] + 3 S-adenosyl-L-methionine = N(6),N(6),N(6)-trimethyl-L-lysyl-[protein] + 3 S-adenosyl-L-homocysteine + 3 H(+). Functionally, methylates ribosomal protein L11. This chain is Ribosomal protein L11 methyltransferase, found in Burkholderia lata (strain ATCC 17760 / DSM 23089 / LMG 22485 / NCIMB 9086 / R18194 / 383).